The primary structure comprises 189 residues: DFLFARTMIGVFKNIEYMCSRTSSKTWGKDAWKKIVVCVISDGRAKINPRTRAVLAGLGCYQDGIAKQQVNGKDVTAHIYEYTTQVGLELKGGQVSLKPRTGCPVQMIFCLKEKNQKKINSHRWFFQAFGRVLDPNICVLLDAGTRXGKDSIYHLWKXFDVDPMCGGACGEIKVMXSHGKKLLNPLVAG.

This sequence belongs to the chitin synthase family. Class I subfamily.

The protein resides in the cell membrane. It catalyses the reaction [(1-&gt;4)-N-acetyl-beta-D-glucosaminyl](n) + UDP-N-acetyl-alpha-D-glucosamine = [(1-&gt;4)-N-acetyl-beta-D-glucosaminyl](n+1) + UDP + H(+). Its function is as follows. Polymerizes chitin, a structural polymer of the cell wall and septum, by transferring the sugar moiety of UDP-GlcNAc to the non-reducing end of the growing chitin polymer. This chain is Chitin synthase 1 (chs1), found in Aspergillus niger.